A 377-amino-acid polypeptide reads, in one-letter code: MFNPLVLDSPSVIFDNGSGLCKAGLSGEIGPRHVTSSVVGYPKFKAPPTGASQKKYFVGEEALYKQEALSLHYPIDRGLVTSWDDVEKLWRHLFEWELGVKPCERPVLVTEPSLNPRENREKTAEMMFETFEVPAFYLSDQAVLALYSSACVTGLVVDSGDGVTCTVPIYEGYSLPHAVSKLYVAGKDITELLTRLLLASGRAFPCPLEKALADDIKEKLCYVALEPEEELSRRAEDVLREYKLPDGNVIYIGDQLYQAPEVLFSPDQLGTHGPGLAQMASNSITKCDADIQKTLFGEIVLSGGSTLFQGLDDRLLKELEQLASKGVPIKITAPPDRWFSTWIGASIVTSLSSFKQMWITAADFKEFGVSVVQRRCF.

It belongs to the actin family.

Its subcellular location is the cytoplasm. It localises to the cytoskeleton. The sequence is that of Actin-related protein T2 (Actrt2) from Mus musculus (Mouse).